A 214-amino-acid polypeptide reads, in one-letter code: Outer-membrane lipoprotein carrier protein (214 aa).

Positions 1 to 24 (MKIKLAFAVLLALCLSLSVMPVLA) are cleaved as a signal peptide.

The protein belongs to the LolA family. Monomer.

It is found in the periplasm. Functionally, participates in the translocation of lipoproteins from the inner membrane to the outer membrane. Only forms a complex with a lipoprotein if the residue after the N-terminal Cys is not an aspartate (The Asp acts as a targeting signal to indicate that the lipoprotein should stay in the inner membrane). This is Outer-membrane lipoprotein carrier protein from Alkalilimnicola ehrlichii (strain ATCC BAA-1101 / DSM 17681 / MLHE-1).